We begin with the raw amino-acid sequence, 953 residues long: UvrABC system protein A (953 aa).

ATP is bound at residue 33–40 (GLSGSGKS). 2 ABC transporter domains span residues 320-599 (WGST…EESI) and 619-949 (GHDN…RYLK). Position 652–659 (652–659 (GVSGSGKS)) interacts with ATP. The C4-type zinc-finger motif lies at 752 to 778 (CEACQGDGLIKIEMHFLPDVYVKCDIC).

This sequence belongs to the ABC transporter superfamily. UvrA family. As to quaternary structure, forms a heterotetramer with UvrB during the search for lesions.

The protein localises to the cytoplasm. Its function is as follows. The UvrABC repair system catalyzes the recognition and processing of DNA lesions. UvrA is an ATPase and a DNA-binding protein. A damage recognition complex composed of 2 UvrA and 2 UvrB subunits scans DNA for abnormalities. When the presence of a lesion has been verified by UvrB, the UvrA molecules dissociate. This is UvrABC system protein A from Rickettsia bellii (strain RML369-C).